The sequence spans 135 residues: MEPTEKSMLLETTSTTKMETKYEDMLPVMAEKMDVEEFVSELCKGFSLLADPERHLITAESLRRNSGILGIEGMSKEDAQGMVREGDLDGDGALNQTEFCVLMVRLSPEMMEDAETWLEKALTQELCNHNLSSMP.

The region spanning 74–109 (MSKEDAQGMVREGDLDGDGALNQTEFCVLMVRLSPE) is the EF-hand domain. Ca(2+) contacts are provided by Asp-87, Asp-89, Asp-91, and Glu-98.

As to quaternary structure, interacts with KCBP (via C-terminus). KIC and calmodulin show competitive binding to KCBP. Interacts with CML42. Binds to ABCG36. As to expression, expressed in stems, leaves and flowers.

Functionally, calcium-binding regulatory protein that interacts with kinesin motor protein KCBP in a calcium-dependent manner. Inhibits KCBP microtubule binding activity and microtubule-stimulated ATPase activity. Involved in the regulation of trichome branching through its interaction with KCBP. The sequence is that of Calcium-binding protein KIC from Arabidopsis thaliana (Mouse-ear cress).